The primary structure comprises 811 residues: Beta-catenin homolog sys-1 (811 aa).

The segment at 1–105 (MHSTGEPQRG…SRGPAAPAQN (105 aa)) is disordered. The span at 64–103 (QQQQMTPQALSTQQQQQVQQQQQRQLYSSPSPSRGPAAPA) shows a compositional bias: low complexity.

In terms of assembly, interacts with TCF transcription factor pop-1 (via N-terminal region); interaction is direct.

It localises to the nucleus. The protein resides in the cytoplasm. Its subcellular location is the cytoplasmic granule. The protein localises to the cytoskeleton. It is found in the microtubule organizing center. It localises to the centrosome. The protein resides in the chromosome. Its subcellular location is the centromere. The protein localises to the kinetochore. Its function is as follows. Transcription coregulator. Part of the Wnt signaling asymmetry pathway, probably acting downstream of putative frizzled ligand mom-2, Wnt/frizzled receptors lin-17 and mom-5, and dishevelled homolog dsh-2. Activates or represses target gene expression, depending on upstream Wnt signals and interactions with transcription factors, such as pop-1. Required for the activation of Wnt-responsive genes in the E blastomere; thereby leading to a role in endoderm specification and gut development. Reciprocal distribution patterns of sys-1 and pop-1/TCF in the daughters of anterior-posterior cell divisions functions in specifying cell fate; a higher sys-1 to pop-1 ratio promotes the posterior cell fate, whereas a low sys-1 to pop-1 ratio promotes the anterior fate. Represses expression of homeobox ttx-3 in neuroblasts of the SIAD/SIBV lineage, perhaps acting by blocking its transcriptional activation by a complex consisting of ref-2 and pop-1. Required for early organization of the hermaphrodite, but not the male, gonad; involved in generation of regulatory cells, known as the distal tip cells (DTC), and in formation of the somatic gonadal primordium. Involved in regulating asymmetric divisions of the somatic gonadal precursor cells (SGP), Z1 and Z4. This chain is Beta-catenin homolog sys-1, found in Caenorhabditis elegans.